A 586-amino-acid chain; its full sequence is Alanine racemase ungC (586 aa).

The interval 187–206 (RVGALPAAASTASPMGSSLP) is disordered. Positions 196-206 (STASPMGSSLP) are enriched in polar residues.

It belongs to the trans-sulfuration enzymes family. It depends on pyridoxal 5'-phosphate as a cofactor.

The catalysed reaction is L-alanine = D-alanine. The protein operates within secondary metabolite biosynthesis. Alanine racemase; part of the gene cluster that mediates the biosynthesis of the unguisins, gamma-aminobutyric acid (GABA)-containing fungal cyclic heptapeptides with the amino acid sequence cyclo-(D-Ala1-D-Val2-L-Phe3-D-Val4-D-Ala5-D-Trp6-GABA7) for unguisin A and cyclo-(D-Ala1-D-Val2-L-Leu3-D-Val4-D-Ala5-D-Trp6-GABA7) for unguisin B. Within the pathway, the alanine racemase ungC catalyzes the interconversion of L-alanine and D-alanine, providing the D-alanine which is accepted by the first adenylation domain of the nonribosomal peptide synthetase (NRPS) ungA. UngA is the main enzyme within the cluster which condenses the 7 residues using its respective 7 modules. The terminal condensation domain (Ct) is involved in cyclization with D-alanine and thereby releasing of unguisins A and B. Finally, the hydrolase ungD catalyzes the hydrolysis between the D-tryptophan and GABA residues of unguisins A and B to produce the corresponding linear peptides. The sequence is that of Alanine racemase ungC from Aspergillus violaceofuscus (strain CBS 115571).